The primary structure comprises 78 residues: Consomatin Nc1 (78 aa).

A signal peptide spans 1–22 (MQTAYWVMVMVMVWITAPLSEG). Residues 23 to 59 (GKPNDVIRGLVPDDLTPQLILRSLISRRRSDKDVGKR) constitute a propeptide that is removed on maturation. At Glu-61 the chain carries 4-carboxyglutamate. Residues Cys-62 and Cys-67 are joined by a disulfide bond. Trp-64 carries the D-tryptophan modification. At Pro-70 the chain carries 4-hydroxyproline. Positions 71–78 (LSRRHDLG) are excised as a propeptide.

This sequence belongs to the conotoxin C superfamily. Consomatin family. Expressed by the venom duct.

It localises to the secreted. Moderately activates human somatostatin receptors (SSTR) with a preferential activation of SSTR1 and SSTR4. In vivo, does not cause behavioral changes in mice within a few minutes of intracranial injection, but causes a progressive loss of movement thereafter. Four to five hours after injection, mice recover, even with the highest dose tested. Shows antinociception and antihyperalgesia activities in two mouse models of acute pain, most probably by acting outside the central nervous system. The chain is Consomatin Nc1 from Conus neocostatus (Cone snail).